The primary structure comprises 470 residues: Aminoacyl transferase sphA (470 aa).

Ser212, His244, and Thr272 together coordinate pyridoxal 5'-phosphate. Position 275 is an N6-(pyridoxal phosphate)lysine (Lys275).

The protein belongs to the class-II pyridoxal-phosphate-dependent aminotransferase family. BioF subfamily. Homodimer. Requires pyridoxal 5'-phosphate as cofactor.

It catalyses the reaction aminomalonate + (3R)-hydroxyoctadeca-4,10-dienoyl-[ACP] = 3-oxopresphingofungin + holo-[ACP] + CO2. It functions in the pathway secondary metabolite biosynthesis. Aminoacyl transferase; part of the gene cluster that mediates the biosynthesis of sphingofungins, bioactive molecules acting as sphingolipid inhibitors via inhibiting serine palmitoyl transferase (SPT). Within the pathway, sphA transfers aminomalonate onto the sphB product 3-hydroxyoctadeca-4,10-dienoyl-ACP to produce 3-keto-presphingofungin. The substrate specificity of sphA using only aminomalonate in Aspergillus fumigatus is responsible for the biosynthesis of sphingofungins B and C but not E and F like in Byssochlamys spectabilis. The PKS sphB does not contain any putative thioesterase domain for releasing the nascent polyketide chain and it has been suggested that aminoacyl transferases can facilitate the polyketide chain release. Sphingofungin biosynthesis starts with the PKS sphB that produces an C18 polyketide precursor 3-hydroxyoctadeca-4,10-dienoyl-ACP containing one delta-6 desaturation and one delta-12 desaturation. The aminoacyl transferase sphA uses the sphB product to produce 3-keto-presphingofungin by adding an aminomalonate molecule. SphF then reduces the C-3 ketone of 3-keto-presphingofungin which leads to presphingofungin. The cytochrome P450 monooxygenase sphH converts presphingofungin into sphingofungin B1 which is further converted to sphingofungin B by the dioxygenase sphC. SphC is also able to convert presphingofungin into sphingofungin B2. The acetyltransferase sphE acetylates sphingofungin B to produce sphingofungin C, but can also convert sphingofungin B1 into sphingofungin C1 and sphingofungin B2 into sphingofungin C2. Finally, sphingofungin C can be spontaneously converted into sphingofungin D. The chain is Aminoacyl transferase sphA from Aspergillus fumigatus (strain CBS 144.89 / FGSC A1163 / CEA10) (Neosartorya fumigata).